Consider the following 275-residue polypeptide: Formamidopyrimidine-DNA glycosylase (275 aa).

The active-site Schiff-base intermediate with DNA is the proline 2. Glutamate 3 functions as the Proton donor in the catalytic mechanism. The Proton donor; for beta-elimination activity role is filled by lysine 58. Residues histidine 91 and arginine 110 each contribute to the DNA site. The FPG-type zinc finger occupies 238–272 (QVYGQTGKPCPRCGQAIVKLKVGGRGTHICPKCQK). The active-site Proton donor; for delta-elimination activity is arginine 262.

Belongs to the FPG family. In terms of assembly, monomer. Zn(2+) is required as a cofactor.

It catalyses the reaction Hydrolysis of DNA containing ring-opened 7-methylguanine residues, releasing 2,6-diamino-4-hydroxy-5-(N-methyl)formamidopyrimidine.. The enzyme catalyses 2'-deoxyribonucleotide-(2'-deoxyribose 5'-phosphate)-2'-deoxyribonucleotide-DNA = a 3'-end 2'-deoxyribonucleotide-(2,3-dehydro-2,3-deoxyribose 5'-phosphate)-DNA + a 5'-end 5'-phospho-2'-deoxyribonucleoside-DNA + H(+). Functionally, involved in base excision repair of DNA damaged by oxidation or by mutagenic agents. Acts as a DNA glycosylase that recognizes and removes damaged bases. Has a preference for oxidized purines, such as 7,8-dihydro-8-oxoguanine (8-oxoG). Has AP (apurinic/apyrimidinic) lyase activity and introduces nicks in the DNA strand. Cleaves the DNA backbone by beta-delta elimination to generate a single-strand break at the site of the removed base with both 3'- and 5'-phosphates. The chain is Formamidopyrimidine-DNA glycosylase from Streptococcus pyogenes serotype M18 (strain MGAS8232).